The primary structure comprises 259 residues: Insulin-like growth factor-binding protein 4 (259 aa).

Residues 1 to 22 form the signal peptide; sequence MLPLCLVAALLLSASGPRPSLG. Residues 24-104 form the IGFBP N-terminal domain; that stretch reads EAIHCPPCSE…MHGQGLCMEL (81 aa). Disulfide bonds link C28-C54, C31-C56, C39-C57, C45-C60, C68-C81, and C75-C101. The tract at residues 115-136 is disordered; sequence QPSDKDEGDHPNNSFSPCSPQD. N-linked (GlcNAc...) asparagine glycosylation is present at N126. Cystine bridges form between C132/C139, C175/C205, C216/C227, and C229/C250. In terms of domain architecture, Thyroglobulin type-1 spans 172 to 250; it reads QGSCQSELHR…GLEPKGELDC (79 aa). A Phosphoserine modification is found at S256.

Binds IGF2 more than IGF1.

It is found in the secreted. IGF-binding proteins prolong the half-life of the IGFs and have been shown to either inhibit or stimulate the growth promoting effects of the IGFs on cell culture. They alter the interaction of IGFs with their cell surface receptors. In Sus scrofa (Pig), this protein is Insulin-like growth factor-binding protein 4 (IGFBP4).